The following is a 387-amino-acid chain: Aminodeoxyfutalosine deaminase (387 aa).

The segment covering 1 to 10 has biased composition (basic and acidic residues); sequence MRPAYDDPRT. A disordered region spans residues 1 to 37; it reads MRPAYDDPRTTDQPITRARPPPRAARGRRLGEEPLTE. Zn(2+) is bound by residues His-61 and His-63. Substrate contacts are provided by Arg-116, Asp-183, and Gly-217. Zn(2+) is bound at residue His-244. Residue Glu-247 is the Proton donor of the active site. Asp-325 provides a ligand contact to Zn(2+).

Belongs to the metallo-dependent hydrolases superfamily. Adenosine and AMP deaminases family. Requires Zn(2+) as cofactor.

The catalysed reaction is 6-amino-6-deoxyfutalosine + H2O + H(+) = futalosine + NH4(+). It functions in the pathway quinol/quinone metabolism; menaquinone biosynthesis. Catalyzes the deamination of aminodeoxyfutalosine (AFL) into futalosine (FL), a step in the biosynthesis of menaquinone (MK, vitamin K2). This Streptomyces coelicolor (strain ATCC BAA-471 / A3(2) / M145) protein is Aminodeoxyfutalosine deaminase.